Reading from the N-terminus, the 285-residue chain is Undecaprenyl-diphosphatase (285 aa).

7 helical membrane-spanning segments follow: residues 40 to 60, 92 to 112, 122 to 142, 159 to 179, 197 to 217, 233 to 253, and 259 to 279; these read DELL…LLYF, LCIL…ENFI, SVYA…WADA, FLIG…RSGI, FSML…LLGL, LIVA…LMAL, and FLPF…TSPI.

The protein belongs to the UppP family.

It is found in the cell inner membrane. It carries out the reaction di-trans,octa-cis-undecaprenyl diphosphate + H2O = di-trans,octa-cis-undecaprenyl phosphate + phosphate + H(+). Functionally, catalyzes the dephosphorylation of undecaprenyl diphosphate (UPP). Confers resistance to bacitracin. This is Undecaprenyl-diphosphatase from Hyphomonas neptunium (strain ATCC 15444).